The sequence spans 946 residues: Inter-alpha-trypsin inhibitor heavy chain H2 (946 aa).

The first 18 residues, methionine 1–alanine 18, serve as a signal peptide directing secretion. The propeptide occupies phenylalanine 19 to arginine 54. A VIT domain is found at leucine 56–glutamate 185. Serine 60 is subject to Phosphoserine. N-linked (GlcNAc...) asparagine glycans are attached at residues asparagine 118 and asparagine 263. 4-carboxyglutamate is present on residues glutamate 282 and glutamate 283. The VWFA domain occupies proline 308–glutamate 468. Asparagine 445 carries an N-linked (GlcNAc...) asparagine glycan. Position 466 is a phosphoserine (serine 466). Aspartate 702 carries the post-translational modification Aspartate 1-(chondroitin 4-sulfate)-ester. The propeptide occupies proline 703–proline 946. The residue at position 886 (serine 886) is a Phosphoserine.

Belongs to the ITIH family. As to quaternary structure, I-alpha-I plasma protease inhibitors are assembled from one or two heavy chains (HC) and one light chain, bikunin. Inter-alpha-inhibitor (I-alpha-I) is composed of ITIH1/HC1, ITIH2/HC2 and bikunin. Heavy chains are linked to bikunin via chondroitin 4-sulfate esterified to the alpha-carboxyl of the C-terminal aspartate after propeptide cleavage. Post-translationally, phosphorylated by FAM20C in the extracellular medium. In terms of tissue distribution, expressed in both liver and brain.

Its subcellular location is the secreted. In terms of biological role, may act as a carrier of hyaluronan in serum or as a binding protein between hyaluronan and other matrix protein, including those on cell surfaces in tissues to regulate the localization, synthesis and degradation of hyaluronan which are essential to cells undergoing biological processes. The chain is Inter-alpha-trypsin inhibitor heavy chain H2 (Itih2) from Mus musculus (Mouse).